Here is an 824-residue protein sequence, read N- to C-terminus: Leucine--tRNA ligase (824 aa).

The 'HIGH' region signature appears at 41 to 51 (PYPSGTLHVGH). The short motif at 580–584 (KMSKS) is the 'KMSKS' region element. Lys583 is a binding site for ATP.

This sequence belongs to the class-I aminoacyl-tRNA synthetase family.

The protein resides in the cytoplasm. It catalyses the reaction tRNA(Leu) + L-leucine + ATP = L-leucyl-tRNA(Leu) + AMP + diphosphate. The sequence is that of Leucine--tRNA ligase from Thermotoga maritima (strain ATCC 43589 / DSM 3109 / JCM 10099 / NBRC 100826 / MSB8).